The sequence spans 376 residues: UDP-4-amino-4,6-dideoxy-N-acetyl-beta-L-altrosamine transaminase (376 aa).

Residues tyrosine 4, 24-27 (EILT), alanine 54, and serine 176 each bind substrate. The residue at position 181 (lysine 181) is an N6-(pyridoxal phosphate)lysine. Residues asparagine 226 and 311 to 314 (QVHY) each bind substrate.

It belongs to the DegT/DnrJ/EryC1 family.

The enzyme catalyses UDP-4-amino-4,6-dideoxy-N-acetyl-beta-L-altrosamine + 2-oxoglutarate = UDP-2-acetamido-2,6-dideoxy-beta-L-arabino-hex-4-ulose + L-glutamate. Functionally, catalyzes the second step in the biosynthesis of pseudaminic acid, a sialic-acid-like sugar that is used to modify flagellin. Uses UDP-2-acetamido-2,6-dideoxy-beta-L-arabino-4-hexulose as substrate producing UDP-4-amino-4,6-dideoxy-beta-L-AltNAc. This is UDP-4-amino-4,6-dideoxy-N-acetyl-beta-L-altrosamine transaminase (pseC) from Campylobacter jejuni subsp. jejuni serotype O:23/36 (strain 81-176).